A 360-amino-acid chain; its full sequence is MAGCRELELTNGSNGGLEFNPMKEYMILSDAQQIAVAVLCTLMGLLSALENVAVLYLILSSQRLRRKPSYLFIGSLAGADFLASVIFACNFVIFHVFHGVDSRNIFLLKIGSVTMTFTASVGSLLLTAVDRYLCLCYPPTYKALVTRGRALVALGVMWVLSALISYLPLMGWTCCPSPCSELFPLIPNDYLLGWLLFIAILFSGIIYTYGYVLWKAHQHVASLAEHQDRQVPGIARMRLDVRLAKTLGLVMAVLLICWFPALALMGHSLVTTLSDKVKEAFAFCSMLCLVNSMINPIIYALRSGEIRSAAQHCLTGWKKYLQGLGSEGKEEAPKSSVTETEAEVKTTTGPGSRTPGCSNC.

At 1–33 the chain is on the extracellular side; that stretch reads MAGCRELELTNGSNGGLEFNPMKEYMILSDAQQ. A glycan (N-linked (GlcNAc...) asparagine) is linked at Asn11. Residues 34-59 form a helical membrane-spanning segment; it reads IAVAVLCTLMGLLSALENVAVLYLIL. Over 60–71 the chain is Cytoplasmic; sequence SSQRLRRKPSYL. A helical membrane pass occupies residues 72–92; that stretch reads FIGSLAGADFLASVIFACNFV. Topologically, residues 93–104 are extracellular; sequence IFHVFHGVDSRN. The chain crosses the membrane as a helical span at residues 105–129; sequence IFLLKIGSVTMTFTASVGSLLLTAV. At 130–149 the chain is on the cytoplasmic side; that stretch reads DRYLCLCYPPTYKALVTRGR. Residues 150 to 172 form a helical membrane-spanning segment; it reads ALVALGVMWVLSALISYLPLMGW. Residues 173-188 lie on the Extracellular side of the membrane; sequence TCCPSPCSELFPLIPN. A helical membrane pass occupies residues 189-214; that stretch reads DYLLGWLLFIAILFSGIIYTYGYVLW. At 215-246 the chain is on the cytoplasmic side; that stretch reads KAHQHVASLAEHQDRQVPGIARMRLDVRLAKT. The helical transmembrane segment at 247 to 267 threads the bilayer; it reads LGLVMAVLLICWFPALALMGH. The Extracellular portion of the chain corresponds to 268–279; sequence SLVTTLSDKVKE. A helical transmembrane segment spans residues 280-301; sequence AFAFCSMLCLVNSMINPIIYAL. The Cytoplasmic segment spans residues 302 to 360; it reads RSGEIRSAAQHCLTGWKKYLQGLGSEGKEEAPKSSVTETEAEVKTTTGPGSRTPGCSNC. Positions 327-360 are disordered; that stretch reads EGKEEAPKSSVTETEAEVKTTTGPGSRTPGCSNC. Ser335 and Ser336 each carry phosphoserine. Residue Thr338 is modified to Phosphothreonine. The segment covering 349 to 360 has biased composition (polar residues); it reads GPGSRTPGCSNC. The residue at position 352 (Ser352) is a Phosphoserine.

The protein belongs to the G-protein coupled receptor 1 family. Constitutively phosphorylated on Ser-352; phosphorylation increases cell internalization and desensitizes the receptor. Expressed in spleen and brain by neurons and glial cells (at protein level). Expressed in lung, testis and thymus but not in heart, liver or kidney. Expressed in cerebellum, cortex and brainstem.

The protein localises to the cell membrane. It is found in the cell projection. Its subcellular location is the dendrite. It localises to the perikaryon. In terms of biological role, heterotrimeric G protein-coupled receptor for endocannabinoid 2-arachidonoylglycerol mediating inhibition of adenylate cyclase. May function in inflammatory response, nociceptive transmission and bone homeostasis. This Rattus norvegicus (Rat) protein is Cannabinoid receptor 2 (Cnr2).